Here is a 211-residue protein sequence, read N- to C-terminus: N-(5'-phosphoribosyl)anthranilate isomerase (211 aa).

Belongs to the TrpF family.

The catalysed reaction is N-(5-phospho-beta-D-ribosyl)anthranilate = 1-(2-carboxyphenylamino)-1-deoxy-D-ribulose 5-phosphate. It participates in amino-acid biosynthesis; L-tryptophan biosynthesis; L-tryptophan from chorismate: step 3/5. In Chromohalobacter salexigens (strain ATCC BAA-138 / DSM 3043 / CIP 106854 / NCIMB 13768 / 1H11), this protein is N-(5'-phosphoribosyl)anthranilate isomerase.